Here is a 360-residue protein sequence, read N- to C-terminus: Histidinol-phosphate aminotransferase (360 aa).

Lys221 bears the N6-(pyridoxal phosphate)lysine mark.

It belongs to the class-II pyridoxal-phosphate-dependent aminotransferase family. Histidinol-phosphate aminotransferase subfamily. As to quaternary structure, homodimer. It depends on pyridoxal 5'-phosphate as a cofactor.

It carries out the reaction L-histidinol phosphate + 2-oxoglutarate = 3-(imidazol-4-yl)-2-oxopropyl phosphate + L-glutamate. The protein operates within amino-acid biosynthesis; L-histidine biosynthesis; L-histidine from 5-phospho-alpha-D-ribose 1-diphosphate: step 7/9. In Desulfitobacterium hafniense (strain DSM 10664 / DCB-2), this protein is Histidinol-phosphate aminotransferase.